Reading from the N-terminus, the 142-residue chain is Domesticated amidase effector 2 (142 aa).

An N-terminal signal peptide occupies residues 1–35 (MKLFLISAALVVLGLAAVADAIGCSDPSPFQGRWV). Active-site residues include cysteine 43 and histidine 94.

It belongs to the cell wall amidase Dae2/Tae2-like family. Post-translationally, may be post-translationally modified, since the saliva wild-type protein is slightly heavier than the recombinant one. As to expression, detected in salivary glands and in the gut (at protein level).

It localises to the secreted. Tick gut and saliva antibacterial peptide that directly antagonizes host skin commensals which enter the ticks during feeding. Acts as a cell wall hydrolase that cleaves the bond between gamma-D-glutamate-meso-diaminopimelate of a peptide stem and D-alanine of another peptide stem in peptidoglycans. In vitro, degrades peptidoglycans from both Gram-negative and Gram-positive bacteria. Is not able to traverse the protective outer membrane of Gram-negative bacteria. Is not able to kill Borrelia burgdorferi, one of the Lyme disease-causing bacteria. This chain is Domesticated amidase effector 2, found in Ixodes scapularis (Black-legged tick).